Consider the following 297-residue polypeptide: SWIRM domain-containing protein laf1 (297 aa).

Disordered stretches follow at residues 50–70 and 109–173; these read PKCS…KPTA and STPA…EFSS. Residues 159–173 are compositionally biased toward polar residues; the sequence is QHNTRFKQSSREFSS. The SWIRM domain maps to 207 to 297; the sequence is LRSEWKGPPL…AFHDEGFFDD (91 aa).

In terms of assembly, component of the RPD3C(L) complex.

It localises to the nucleus. Functionally, component of the RPD3C(L) histone deacetylase complex (HDAC) responsible for the deacetylation of lysine residues on the N-terminal part of the core histones (H2A, H2B, H3 and H4). Histone deacetylation gives a tag for epigenetic repression and plays an important role in transcriptional regulation, cell cycle progression and developmental events. This is SWIRM domain-containing protein laf1 (laf1) from Schizosaccharomyces pombe (strain 972 / ATCC 24843) (Fission yeast).